The following is a 235-amino-acid chain: Pyridoxine 5'-phosphate synthase (235 aa).

N6 serves as a coordination point for 3-amino-2-oxopropyl phosphate. A 1-deoxy-D-xylulose 5-phosphate-binding site is contributed by 8–9 (DH). Residue R17 coordinates 3-amino-2-oxopropyl phosphate. The Proton acceptor role is filled by H42. 1-deoxy-D-xylulose 5-phosphate is bound by residues R44 and H49. E69 (proton acceptor) is an active-site residue. T99 lines the 1-deoxy-D-xylulose 5-phosphate pocket. H189 functions as the Proton donor in the catalytic mechanism. 3-amino-2-oxopropyl phosphate is bound by residues G190 and 211–212 (GH).

Belongs to the PNP synthase family. Homooctamer; tetramer of dimers.

The protein resides in the cytoplasm. It catalyses the reaction 3-amino-2-oxopropyl phosphate + 1-deoxy-D-xylulose 5-phosphate = pyridoxine 5'-phosphate + phosphate + 2 H2O + H(+). It functions in the pathway cofactor biosynthesis; pyridoxine 5'-phosphate biosynthesis; pyridoxine 5'-phosphate from D-erythrose 4-phosphate: step 5/5. Functionally, catalyzes the complicated ring closure reaction between the two acyclic compounds 1-deoxy-D-xylulose-5-phosphate (DXP) and 3-amino-2-oxopropyl phosphate (1-amino-acetone-3-phosphate or AAP) to form pyridoxine 5'-phosphate (PNP) and inorganic phosphate. In Chlorobium phaeovibrioides (strain DSM 265 / 1930) (Prosthecochloris vibrioformis (strain DSM 265)), this protein is Pyridoxine 5'-phosphate synthase.